Reading from the N-terminus, the 347-residue chain is NADH-quinone oxidoreductase subunit H (347 aa).

The next 8 helical transmembrane spans lie at 13-33 (LLIL…VAYI), 82-102 (GVFL…WAVI), 115-135 (VGIL…IMGG), 161-181 (IGFV…SDIV), 198-218 (FLDW…ISAL), 248-268 (FLLF…LATI), 283-303 (FTWV…FFGI), and 321-341 (LGWK…AAFL).

This sequence belongs to the complex I subunit 1 family. As to quaternary structure, NDH-1 is composed of 14 different subunits. Subunits NuoA, H, J, K, L, M, N constitute the membrane sector of the complex.

The protein localises to the cell inner membrane. It catalyses the reaction a quinone + NADH + 5 H(+)(in) = a quinol + NAD(+) + 4 H(+)(out). In terms of biological role, NDH-1 shuttles electrons from NADH, via FMN and iron-sulfur (Fe-S) centers, to quinones in the respiratory chain. The immediate electron acceptor for the enzyme in this species is believed to be ubiquinone. Couples the redox reaction to proton translocation (for every two electrons transferred, four hydrogen ions are translocated across the cytoplasmic membrane), and thus conserves the redox energy in a proton gradient. This subunit may bind ubiquinone. The chain is NADH-quinone oxidoreductase subunit H from Mesorhizobium japonicum (strain LMG 29417 / CECT 9101 / MAFF 303099) (Mesorhizobium loti (strain MAFF 303099)).